A 486-amino-acid chain; its full sequence is Pentatricopeptide repeat-containing protein At2g01860 (486 aa).

A disordered region spans residues 111–137 (QKPDKPSRVRPLPLPQPHKLRPLGLPT). PPR repeat units follow at residues 290–321 (DSSVYVKMILEIAKNPDKYHLVVALLEELKKR), 327–361 (SQQDCTSIMKICVKLGEFELVESLFDWFKASNREP), 362–396 (SVVMYTTMIHSRYSEQKYREAMSVVWEMEESNCLL), 397–431 (DLPAYRVVIKLFVALDDLGRAMRYYSKLKEAGFSP), and 432–466 (TYDIYRDMISVYTASGRLTKCKEICKEVEDAGLRL).

It belongs to the PPR family. P subfamily.

The chain is Pentatricopeptide repeat-containing protein At2g01860 (EMB975) from Arabidopsis thaliana (Mouse-ear cress).